Reading from the N-terminus, the 195-residue chain is MTRTATIERNTSETRIRLTLNIDGRGETSIGSGVPFLDHMLNLFARHGLFDLSLEACGDTQIDFHHTVEDIGIVLGEAFKQALADKQGINRYGQVTVPMDETLASAVVDISGRPYLVYNVDLPKAKVGDFDVELAQEFFQAFANHCGINLHINLLYGDNLHHIIEACFKAVGRAMDMATRLDPRVEGVMSTKGVL.

This sequence belongs to the imidazoleglycerol-phosphate dehydratase family.

It is found in the cytoplasm. It carries out the reaction D-erythro-1-(imidazol-4-yl)glycerol 3-phosphate = 3-(imidazol-4-yl)-2-oxopropyl phosphate + H2O. Its pathway is amino-acid biosynthesis; L-histidine biosynthesis; L-histidine from 5-phospho-alpha-D-ribose 1-diphosphate: step 6/9. In Pelobacter propionicus (strain DSM 2379 / NBRC 103807 / OttBd1), this protein is Imidazoleglycerol-phosphate dehydratase.